A 71-amino-acid chain; its full sequence is Brevinin-1E (71 aa).

An N-terminal signal peptide occupies residues 1 to 22 (MFTLKKSMLLLFFLGTINLSLC). A propeptide spanning residues 23–45 (EEERDADEEERRDNPDESEVEVE) is cleaved from the precursor. The cysteines at positions 65 and 71 are disulfide-linked.

The protein belongs to the frog skin active peptide (FSAP) family. Brevinin subfamily. In terms of tissue distribution, expressed by the skin glands.

The protein resides in the secreted. In terms of biological role, shows antibacterial activity against representative Gram-negative and Gram-positive bacterial species, and a very high hemolytic activity. In Pelophylax lessonae (Pool frog), this protein is Brevinin-1E.